The following is a 281-amino-acid chain: uncharacterized protein (281 aa).

Residues 242 to 281 (IDKQSRKKNIIREINDIKSKINDLSNYMDNLISELDDLFD) are a coiled coil.

This is an uncharacterized protein from Acanthamoeba polyphaga (Amoeba).